Here is a 647-residue protein sequence, read N- to C-terminus: Threonine--tRNA ligase (647 aa).

The TGS domain maps to 1-61 (MIKITFPDGA…EEDGSIEIVT (61 aa)). Positions 240–538 (DHRKLGKELD…LIETYKGAFP (299 aa)) are catalytic. The Zn(2+) site is built by Cys-334, His-385, and His-515.

This sequence belongs to the class-II aminoacyl-tRNA synthetase family. As to quaternary structure, homodimer. Requires Zn(2+) as cofactor.

Its subcellular location is the cytoplasm. The enzyme catalyses tRNA(Thr) + L-threonine + ATP = L-threonyl-tRNA(Thr) + AMP + diphosphate + H(+). Catalyzes the attachment of threonine to tRNA(Thr) in a two-step reaction: L-threonine is first activated by ATP to form Thr-AMP and then transferred to the acceptor end of tRNA(Thr). Also edits incorrectly charged L-seryl-tRNA(Thr). The polypeptide is Threonine--tRNA ligase (Streptococcus pyogenes serotype M18 (strain MGAS8232)).